The primary structure comprises 215 residues: Large ribosomal subunit protein bL25 (215 aa).

Composition is skewed to polar residues over residues M1–K19 and E206–E215. Disordered regions lie at residues M1–G29 and A190–E215.

Belongs to the bacterial ribosomal protein bL25 family. CTC subfamily. Part of the 50S ribosomal subunit; part of the 5S rRNA/L5/L18/L25 subcomplex. Contacts the 5S rRNA. Binds to the 5S rRNA independently of L5 and L18.

Its function is as follows. This is one of the proteins that binds to the 5S RNA in the ribosome where it forms part of the central protuberance. This chain is Large ribosomal subunit protein bL25, found in Mycobacterium leprae (strain TN).